The sequence spans 252 residues: Putative zinc finger CCCH domain-containing protein 58 (252 aa).

The segment at 35–62 (NHKSVLCMKWREGRCHNGVACRYAHGEE) adopts a C3H1-type zinc-finger fold. 3 disordered regions span residues 71–95 (RVGG…SGST), 109–180 (RHGR…SAAD), and 215–252 (TATS…APPK). 2 stretches are compositionally biased toward low complexity: residues 133–149 (SARS…TTPP) and 229–238 (ITTTTSSSTT).

This is Putative zinc finger CCCH domain-containing protein 58 from Oryza sativa subsp. japonica (Rice).